The following is an 879-amino-acid chain: MTDLAPKYNPNEVEKGRYQEWLDEDLFKPSGDKKAHPYSIVIPPPNVTGKLHLGHAWDTAIQDTLIRFKRMEGYDTLYLPGMDHAGIATQAKVEAKLRKQGKDRHEMGREAFVKQVWDWKDEYANIIKSQWSKLGLSLDYSRERFTLDKGLSKAVKKVFVQLYNEGLIYRGEYIINWDPTLETALSDIEVIHKDDKGAFYHVKYPFADGSGFVEIATTRPETMFGDTAVAVAPGDPRYKDIVGKELILPLVGRHIPIIEDQHVDPEFGTGLVKITPAHDPNDFQVGNRHNLKRINVMNDDGTMNEEAGKYAGMDRFECREALVKDLKEEGYLIKVEPIVHSVGHSERSGVQVEPRLSKQWFVKMKPLADKVLENQKSEGKVNFVPERFEQTLNHWMENVHDWVISRQLWWGHRIPAWYNKKTGETYVGEEAPKDIENWEQDPDVLDTWFSSALWPFSTMGWPDTDNPDFKRYFPTNALVTGYDIIFFWVSRMIFQSLHFTKERPFKDVVLHGLIRDEQGRKMSKSLGNGIDPMDVIDKYGADALRWFLLNGTAPGQDTRFSYTKMDAAWNFINKIWNVSRFVIMNLPEDAKPAHMPDTSKFDLSDKWIFDRLNHTIGEVTRLFGEYQFGEAGREAYNFIWNDFCDWYIEISKVALNGDDEELKARKQENLIWILDQILRLMHPIMPFVTEKLWLSMPHEGKSIMTASYPVTHKEFENKTADQEMDFLIEVIKAVRNIRMEVNAPMSSEIDIMIKLDDLNNKHILDENVDYVENFLHPKKLEVSADIEAPKLAKTAVIPGAQIFVPLTELVNVDEELAKMEKEAKRLEDEVARCEKKLSNKGFVDHAPEAVVNKEKEKMADYESQLSGVRERIQDLKESK.

The 'HIGH' region signature appears at 45–55; it reads PNVTGKLHLGH. The 'KMSKS' region motif lies at 521-525; the sequence is KMSKS. Lys524 lines the ATP pocket. A coiled-coil region spans residues 806–879; that stretch reads LTELVNVDEE…ERIQDLKESK (74 aa).

The protein belongs to the class-I aminoacyl-tRNA synthetase family. ValS type 1 subfamily. In terms of assembly, monomer.

Its subcellular location is the cytoplasm. The catalysed reaction is tRNA(Val) + L-valine + ATP = L-valyl-tRNA(Val) + AMP + diphosphate. Catalyzes the attachment of valine to tRNA(Val). As ValRS can inadvertently accommodate and process structurally similar amino acids such as threonine, to avoid such errors, it has a 'posttransfer' editing activity that hydrolyzes mischarged Thr-tRNA(Val) in a tRNA-dependent manner. The chain is Valine--tRNA ligase from Lactobacillus acidophilus (strain ATCC 700396 / NCK56 / N2 / NCFM).